The following is a 113-amino-acid chain: Hemerythrin (113 aa).

Residues His25, His54, Glu58, His73, His77, His101, and Asp106 each coordinate Fe cation.

The protein belongs to the hemerythrin family. In terms of assembly, homotrimer.

Functionally, hemerythrin is a respiratory protein in blood cells of certain marine worms. The oxygen-binding site in each chain contains two iron atoms. This Siphonosoma cumanense (Sipunculan worm) protein is Hemerythrin.